Consider the following 152-residue polypeptide: UPF0266 membrane protein YobD (152 aa).

3 helical membrane-spanning segments follow: residues 6–26 (LVLI…QFIM), 45–65 (IDSV…VTNH), and 67–87 (ALIT…IFWI).

It belongs to the UPF0266 family.

It localises to the cell inner membrane. The protein is UPF0266 membrane protein YobD of Shigella boydii serotype 18 (strain CDC 3083-94 / BS512).